Here is a 134-residue protein sequence, read N- to C-terminus: Retinol-binding protein 2 (134 aa).

The all-trans-retinol site is built by Lys-41 and Gln-109.

This sequence belongs to the calycin superfamily. Fatty-acid binding protein (FABP) family. In terms of tissue distribution, expressed in prenatal liver, intestine and lung, and in adult intestine.

It is found in the cytoplasm. Functionally, intracellular transport of retinol. In Mus musculus (Mouse), this protein is Retinol-binding protein 2 (Rbp2).